We begin with the raw amino-acid sequence, 106 residues long: NADH-quinone oxidoreductase subunit K (106 aa).

3 consecutive transmembrane segments (helical) span residues isoleucine 10–valine 30, valine 35–phenylalanine 55, and valine 67–isoleucine 87.

It belongs to the complex I subunit 4L family. As to quaternary structure, NDH-1 is composed of 14 different subunits. Subunits NuoA, H, J, K, L, M, N constitute the membrane sector of the complex.

The protein localises to the cell inner membrane. It carries out the reaction a quinone + NADH + 5 H(+)(in) = a quinol + NAD(+) + 4 H(+)(out). In terms of biological role, NDH-1 shuttles electrons from NADH, via FMN and iron-sulfur (Fe-S) centers, to quinones in the respiratory chain. The immediate electron acceptor for the enzyme in this species is believed to be ubiquinone. Couples the redox reaction to proton translocation (for every two electrons transferred, four hydrogen ions are translocated across the cytoplasmic membrane), and thus conserves the redox energy in a proton gradient. The sequence is that of NADH-quinone oxidoreductase subunit K from Leptospira interrogans serogroup Icterohaemorrhagiae serovar copenhageni (strain Fiocruz L1-130).